A 388-amino-acid chain; its full sequence is 4-hydroxy-3-methylbut-2-en-1-yl diphosphate synthase (flavodoxin) (388 aa).

[4Fe-4S] cluster-binding residues include cysteine 281, cysteine 284, cysteine 316, and glutamate 323.

This sequence belongs to the IspG family. The cofactor is [4Fe-4S] cluster.

The catalysed reaction is (2E)-4-hydroxy-3-methylbut-2-enyl diphosphate + oxidized [flavodoxin] + H2O + 2 H(+) = 2-C-methyl-D-erythritol 2,4-cyclic diphosphate + reduced [flavodoxin]. Its pathway is isoprenoid biosynthesis; isopentenyl diphosphate biosynthesis via DXP pathway; isopentenyl diphosphate from 1-deoxy-D-xylulose 5-phosphate: step 5/6. Its function is as follows. Converts 2C-methyl-D-erythritol 2,4-cyclodiphosphate (ME-2,4cPP) into 1-hydroxy-2-methyl-2-(E)-butenyl 4-diphosphate. The chain is 4-hydroxy-3-methylbut-2-en-1-yl diphosphate synthase (flavodoxin) from Arthrobacter sp. (strain FB24).